We begin with the raw amino-acid sequence, 433 residues long: Steroid C26-monooxygenase (433 aa).

Position 202 (Gly202) interacts with substrate. Residue Cys377 participates in heme binding.

It belongs to the cytochrome P450 family. Requires heme as cofactor.

The enzyme catalyses cholest-4-en-3-one + 6 reduced [2Fe-2S]-[ferredoxin] + 3 O2 + 5 H(+) = (25S)-3-oxocholest-4-en-26-oate + 6 oxidized [2Fe-2S]-[ferredoxin] + 4 H2O. The protein operates within steroid metabolism; cholesterol degradation. Its function is as follows. Involved in the utilization of cholesterol as the sole carbon and energy source by degrading the side chain during infection. Primarily catalyzes the sequential oxidation of the terminal methyl of cholest-4-en-3-one into (25S)-26-hydroxycholest-4-en-3-one (alcohol), (25S)-26-oxocholest-4-en-3-one (aldehyde), to finally yield the carboxylic acid (25S)-3-oxocholest-4-en-26-oate. Also able to sequentially oxidize cholesterol itself, not only cholest-4-en-3-one. This is Steroid C26-monooxygenase (cyp125) from Mycobacterium bovis (strain ATCC BAA-935 / AF2122/97).